A 1255-amino-acid chain; its full sequence is Structural polyprotein (1255 aa).

Residues 1–33 (MFPFQPMYPMQPMPYRNPFAAPRRPWFPRTDPF) are necessary for nucleocapsid assembly and virus assembly. Residues 33–68 (FLAMQVQELTRSMANLTFKQRRDAPPEGPPAKKPKR) are host transcription inhibition. Residues 41 to 48 (LTRSMANL) carry the Supraphysiological nuclear export signal motif. The segment at 44-119 (SMANLTFKQR…KKPGKRQRMV (76 aa)) is disordered. The short motif at 64–68 (KKPKR) is the Nuclear localization signal element. Positions 80–92 (GKKKKNQGKKKAK) are enriched in basic residues. The interval 91–127 (AKTGPPNPKAQSGNKKKPNKKPGKRQRMVMKLESDKT) is binding to the viral RNA. At Thr-93 the chain carries Phosphothreonine. Residues 104–118 (NKKKPNKKPGKRQRM) show a composition bias toward basic residues. Residues 112-126 (PGKRQRMVMKLESDK) form a ribosome-binding region. Ser-124 carries the post-translational modification Phosphoserine. In terms of domain architecture, Peptidase S3 spans 126–275 (KTFPIMLEGK…KYTPENCEQW (150 aa)). The residue at position 127 (Thr-127) is a Phosphothreonine. Residue His-152 is the Charge relay system of the active site. The tract at residues 168–173 (KKASKY) is interaction with spike glycoprotein E2. Residues Asp-174 and Ser-226 each act as charge relay system in the active site. Residues 260 to 264 (EKGVT) are interaction with spike glycoprotein E2. A functions as an uncleaved signal peptide for the precursor of protein E3/E2 region spans residues 276–287 (SLVTTMCLLANV). The Extracellular portion of the chain corresponds to 276 to 701 (SLVTTMCLLA…HYYHRYPMST (426 aa)). 7 disulfides stabilise this stretch: Cys-282–Cys-291, Cys-353–Cys-457, Cys-356–Cys-361, Cys-424–Cys-438, Cys-485–Cys-600, Cys-534–Cys-560, and Cys-536–Cys-554. Asn-286 carries an N-linked (GlcNAc...) asparagine; by host glycan. Asn-652 carries an N-linked (GlcNAc...) asparagine; by host glycan. Residues 702–722 (ILGLSICAAIVTVSVAASTWL) traverse the membrane as a helical segment. Over 723-757 (FCKSRVSCLTPYRLTPNARMPLCLAVLCCARTARA) the chain is Cytoplasmic. Residues 725-729 (KSRVS) form an interaction with the capsid protein region. 3 S-palmitoyl cysteine; by host lipidation sites follow: Cys-730, Cys-750, and Cys-751. Residues 730-750 (CLTPYRLTPNARMPLCLAVLC) are transient transmembrane before p62-6K protein processing. Cys-730 and Cys-751 form a disulfide bridge. Residues 758–769 (ETTWESLDHLWN) lie on the Extracellular side of the membrane. A helical transmembrane segment spans residues 770–790 (NNQQMFWIQLLIPLAALIVVT). Residue Arg-791 is a topological domain, cytoplasmic. The helical transmembrane segment at 792–812 (LLKCVCCVVPFLVVAGAAGAG) threads the bilayer. Residues 813–1225 (AYEHATTMPS…SKTAWTWLTS (413 aa)) are Extracellular-facing. 4 cysteine pairs are disulfide-bonded: Cys-862/Cys-927, Cys-875/Cys-907, Cys-876/Cys-909, and Cys-881/Cys-891. The E1 fusion peptide loop stretch occupies residues 897 to 914 (VYPFMWGGAYCFCDTENT). Asn-947 and Asn-1083 each carry an N-linked (GlcNAc...) asparagine; by host glycan. Cystine bridges form between Cys-1072/Cys-1084, Cys-1114/Cys-1189, Cys-1119/Cys-1193, and Cys-1141/Cys-1183. A helical transmembrane segment spans residues 1226–1246 (LLGGSAVIIIIGLVLATIVAM). Residues 1247 to 1255 (YVLTNQKHN) are Cytoplasmic-facing.

As to quaternary structure, homodimer. Homomultimer. Interacts with host karyopherin KPNA4; this interaction allows the nuclear import of the viral capsid protein. Interacts with spike glycoprotein E2. Interacts with host IRAK1; the interaction leads to inhibition of IRAK1-dependent signaling. Part of a tetrameric complex composed of host CRM1, host importin alpha/beta dimer and the viral capsid; this complex blocks the receptor-mediated transport through the nuclear pore. Interacts with host phosphatase PPP1CA; this interaction dephosphorylates the capsid protein, which increases its ability to bind to the viral genome. In terms of assembly, the precursor of protein E3/E2 and E1 form a heterodimer shortly after synthesis. Interacts with spike glycoprotein E2. The precursor of protein E3/E2 and E1 form a heterodimer shortly after synthesis. Processing of the precursor of protein E3/E2 into E2 and E3 results in a heterodimer of the spike glycoproteins E2 and E1. Spike at virion surface are constituted of three E2-E1 heterodimers. After target cell attachment and endocytosis, E1 change conformation to form homotrimers. Interacts with 6K protein. Interacts with host LDLRAD3; this interaction mediates viral entry to the host cell. As to quaternary structure, interacts with spike glycoprotein E1. Processing of the precursor of protein E3/E2 into E2 and E3 results in a heterodimer of the spike glycoproteins E2 and E1. Spike at virion surface are constituted of a trimer of E2-E1 heterodimers. Interacts with 6K protein. Interacts with host LDLRAD3; this interaction mediates viral entry to the host cell. In terms of assembly, oligomer. Interacts with spike glycoprotein E1. Interacts with spike glycoprotein E2. In terms of processing, structural polyprotein: Specific enzymatic cleavages in vivo yield mature proteins. Capsid protein is auto-cleaved during polyprotein translation, unmasking a signal peptide at the N-terminus of the precursor of E3/E2. The remaining polyprotein is then targeted to the host endoplasmic reticulum, where host signal peptidase cleaves it into pE2, 6K and E1 proteins. pE2 is further processed to mature E3 and E2 by host furin in trans-Golgi vesicle. Post-translationally, phosphorylated on serine and threonine residues. Palmitoylated via thioester bonds. These palmitoylations may induce disruption of the C-terminus transmembrane. This would result in the reorientation of E2 C-terminus from lumenal to cytoplasmic side. In terms of processing, N-glycosylated. Post-translationally, palmitoylated via thioester bonds.

The protein resides in the virion. It is found in the host cytoplasm. It localises to the host cell membrane. The protein localises to the host nucleus. Its subcellular location is the virion membrane. The protein resides in the host Golgi apparatus. It is found in the host trans-Golgi network. It localises to the host endoplasmic reticulum. The catalysed reaction is Autocatalytic release of the core protein from the N-terminus of the togavirus structural polyprotein by hydrolysis of a -Trp-|-Ser- bond.. Its function is as follows. Forms an icosahedral capsid with a T=4 symmetry composed of 240 copies of the capsid protein surrounded by a lipid membrane through which penetrate 80 spikes composed of trimers of E1-E2 heterodimers. The capsid protein binds to the viral RNA genome at a site adjacent to a ribosome binding site for viral genome translation following genome release. Possesses a protease activity that results in its autocatalytic cleavage from the nascent structural protein. Following its self-cleavage, the capsid protein transiently associates with ribosomes, and within several minutes the protein binds to viral RNA and rapidly assembles into icosahedric core particles. The resulting nucleocapsid eventually associates with the cytoplasmic domain of the spike glycoprotein E2 at the cell membrane, leading to budding and formation of mature virions. In case of infection, new virions attach to target cells and after clathrin-mediated endocytosis their membrane fuses with the host endosomal membrane. This leads to the release of the nucleocapsid into the cytoplasm, followed by an uncoating event necessary for the genomic RNA to become accessible. The uncoating might be triggered by the interaction of capsid proteins with ribosomes. Binding of ribosomes would release the genomic RNA since the same region is genomic RNA-binding and ribosome-binding. Specifically inhibits interleukin-1 receptor-associated kinase 1/IRAK1-dependent signaling during viral entry, representing a means by which the alphaviruses may evade innate immune detection and activation prior to viral gene expression. Inhibits host transcription. Forms a tetrameric complex with XPO1/CRM1 and the nuclear import receptor importin. This complex blocks the central channel of host nuclear pores thereby inhibiting the receptor-mediated nuclear transport and thus the host mRNA and rRNA transcription. The inhibition of transcription is linked to a cytopathic effect on the host cell. Functionally, provides the signal sequence for the translocation of the precursor of protein E3/E2 to the host endoplasmic reticulum. Furin-cleaved E3 remains associated with spike glycoprotein E1 and mediates pH protection of the latter during the transport via the secretory pathway. After virion release from the host cell, the assembly protein E3 is gradually released in the extracellular space. Plays a role in viral attachment to target host cell, by binding to the cell receptor LDLRAD3. Synthesized as a p62 precursor which is processed by furin at the cell membrane just before virion budding, giving rise to E2-E1 heterodimer. The p62-E1 heterodimer is stable, whereas E2-E1 is unstable and dissociate at low pH. p62 is processed at the last step, presumably to avoid E1 fusion activation before its final export to cell surface. E2 C-terminus contains a transitory transmembrane that would be disrupted by palmitoylation, resulting in reorientation of the C-terminal tail from lumenal to cytoplasmic side. This step is critical since E2 C-terminus is involved in budding by interacting with capsid proteins. This release of E2 C-terminus in cytoplasm occurs lately in protein export, and precludes premature assembly of particles at the endoplasmic reticulum membrane. In terms of biological role, acts as a viroporin that participates in virus glycoprotein processing and transport to the plasma membrane, cell permeabilization and budding of viral particles. Disrupts the calcium homeostasis of the cell, probably at the endoplasmic reticulum level. This leads to cytoplasmic calcium elevation. Because of its lipophilic properties, the 6K protein is postulated to influence the selection of lipids that interact with the transmembrane domains of the glycoproteins, which, in turn, affects the deformability of the bilayer required for the extreme curvature that occurs as budding proceeds. Present in low amount in virions, about 3% compared to viral glycoproteins. Its function is as follows. Class II viral fusion protein. Fusion activity is inactive as long as E1 is bound to E2 in mature virion. After virus attachment to cell receptor LDLRAD3 and endocytosis, acidification of the endosome induce dissociation of E1/E2 heterodimer and concomitant trimerization of the E1 subunits. This E1 trimer is fusion active, and promotes release of viral nucleocapsid in cytoplasm after endosome and viral membrane fusion. Efficient fusion requires the presence of cholesterol and sphingolipid in the target membrane. In Venezuelan equine encephalitis virus (strain P676) (VEEV), this protein is Structural polyprotein.